The chain runs to 699 residues: SPS-sensor serine protease component SSY5 (699 aa).

2 disordered regions span residues 1 to 113 and 129 to 158; these read MVRF…LQGF and VKEE…GNAR. Positions 1–381 are excised as a propeptide; it reads MVRFFGLNKK…YCVKDYIKKA (381 aa). The span at 24 to 38 shows a compositional bias: polar residues; sequence NEQNAAETSSSNVSG. Over residues 39-51 the composition is skewed to basic and acidic residues; the sequence is NEERIDPNSHDAN. The span at 52 to 78 shows a compositional bias: low complexity; sequence PENANNDDASTTFGSSIQSSSIFSRGR. Positions 83-93 are enriched in polar residues; sequence TGASSSMATSE. 2 stretches are compositionally biased toward low complexity: residues 97–109 and 144–154; these read HSSG…NSKN and SSSTSSTLATS. The segment at 459–699 is serine protease; that stretch reads FAITCAHVVL…QWDIDPQLDG (241 aa). Catalysis depends on charge relay system residues His465, Asp545, and Ser640.

Belongs to the peptidase S64 family. As to quaternary structure, component of the plasma membrane SPS (SSY1-PTR3-SSY5) amino acid sensor complex. The propeptide is autoproteolytically cleaved from the catalytic domain but remains associated, forming an inactive protease complex. This processing occurs even in the absence of signaling.

It localises to the cell membrane. Functionally, protease component of the SPS-sensor system, which regulates the expression of several amino acid-metabolizing enzymes and amino acid- and peptide-permeases in response to extracellular amino acid levels by controlling the activity of two transcription factors, STP1 and STP2. Catalyzes the activation of these transcription factors, which are synthesized as latent cytoplasmic precursors, by proteolytic removal of an N-terminal inhibitory domain containing cytoplasmic retention motifs. SSY5 binds as an inactive protease complex to STP1. In response to extracellular amino acids and dependent on the other SPS-sensor components, the inhibitory propeptide is induced to dissociate, and thereby enables the catalytic domain to process STP1. The protein is SPS-sensor serine protease component SSY5 (SSY5) of Saccharomyces cerevisiae (strain YJM789) (Baker's yeast).